The primary structure comprises 197 residues: ADP-ribosylation factor-like protein 16 (197 aa).

GTP-binding positions include 30–37, 82–86, and 139–142; these read GATGVGKT, ELGGC, and NKID.

Belongs to the small GTPase superfamily. Arf family. As to quaternary structure, interacts with RIGI; this interaction is GTP-dependent and induced upon viral infection; this interaction suppresses the RNA sensing activity of RIGI.

Its subcellular location is the cytoplasm. May suppress the RNA sensing activity of RIGI in a GTP-dependent. This Homo sapiens (Human) protein is ADP-ribosylation factor-like protein 16.